Here is a 141-residue protein sequence, read N- to C-terminus: MAKKVVALIKLALPAGKANPAPPVGPALGQHGVNIMAFCKEYNARTQDKVGLVIPVEISVFEDRSFTFILKTPPASVLIAKAAGIERGSGNPNKTKVGKITTAQLREIAETKLPDFNTKNVEAAMRIVEGTARNMGVTIAD.

The protein belongs to the universal ribosomal protein uL11 family. In terms of assembly, part of the ribosomal stalk of the 50S ribosomal subunit. Interacts with L10 and the large rRNA to form the base of the stalk. L10 forms an elongated spine to which L12 dimers bind in a sequential fashion forming a multimeric L10(L12)X complex. One or more lysine residues are methylated.

Forms part of the ribosomal stalk which helps the ribosome interact with GTP-bound translation factors. The polypeptide is Large ribosomal subunit protein uL11 (Synechococcus sp. (strain ATCC 27144 / PCC 6301 / SAUG 1402/1) (Anacystis nidulans)).